A 415-amino-acid chain; its full sequence is Branched-chain-amino-acid aminotransferase 5, chloroplastic (415 aa).

Residues 1-65 constitute a chloroplast transit peptide; that stretch reads MERSAVASGF…IVSEVSRNRR (65 aa). Lys-261 bears the N6-(pyridoxal phosphate)lysine mark.

It belongs to the class-IV pyridoxal-phosphate-dependent aminotransferase family. Pyridoxal 5'-phosphate is required as a cofactor.

It is found in the plastid. The protein resides in the chloroplast. The catalysed reaction is L-leucine + 2-oxoglutarate = 4-methyl-2-oxopentanoate + L-glutamate. The enzyme catalyses L-isoleucine + 2-oxoglutarate = (S)-3-methyl-2-oxopentanoate + L-glutamate. It carries out the reaction L-valine + 2-oxoglutarate = 3-methyl-2-oxobutanoate + L-glutamate. It functions in the pathway amino-acid biosynthesis; L-isoleucine biosynthesis; L-isoleucine from 2-oxobutanoate: step 4/4. Its pathway is amino-acid biosynthesis; L-leucine biosynthesis; L-leucine from 3-methyl-2-oxobutanoate: step 4/4. The protein operates within amino-acid biosynthesis; L-valine biosynthesis; L-valine from pyruvate: step 4/4. In terms of biological role, converts 2-oxo acids to branched-chain amino acids. Acts on leucine, isoleucine and valine. This Arabidopsis thaliana (Mouse-ear cress) protein is Branched-chain-amino-acid aminotransferase 5, chloroplastic (BCAT5).